We begin with the raw amino-acid sequence, 168 residues long: Phosphopantetheine adenylyltransferase (168 aa).

Threonine 14 contributes to the substrate binding site. Residues 14-15 (TF) and histidine 22 each bind ATP. Substrate-binding residues include lysine 46, leucine 78, and arginine 92. Residues 93-95 (GLR), glutamate 103, and 128-134 (YSFISSS) contribute to the ATP site.

Belongs to the bacterial CoaD family. In terms of assembly, homohexamer. Requires Mg(2+) as cofactor.

Its subcellular location is the cytoplasm. It carries out the reaction (R)-4'-phosphopantetheine + ATP + H(+) = 3'-dephospho-CoA + diphosphate. It functions in the pathway cofactor biosynthesis; coenzyme A biosynthesis; CoA from (R)-pantothenate: step 4/5. Functionally, reversibly transfers an adenylyl group from ATP to 4'-phosphopantetheine, yielding dephospho-CoA (dPCoA) and pyrophosphate. In Xanthomonas campestris pv. campestris (strain B100), this protein is Phosphopantetheine adenylyltransferase.